We begin with the raw amino-acid sequence, 66 residues long: UPF0434 protein Mnod_1613 (66 aa).

It belongs to the UPF0434 family.

This is UPF0434 protein Mnod_1613 from Methylobacterium nodulans (strain LMG 21967 / CNCM I-2342 / ORS 2060).